A 91-amino-acid chain; its full sequence is Small ribosomal subunit protein bS16c (91 aa).

This sequence belongs to the bacterial ribosomal protein bS16 family.

The protein resides in the plastid. Its subcellular location is the chloroplast. The protein is Small ribosomal subunit protein bS16c of Pelargonium hortorum (Common geranium).